The chain runs to 875 residues: Neurotrypsin (875 aa).

The first 20 residues, 1-20 (MTLARFALALLFGVLPEVVG), serve as a signal peptide directing secretion. Residue N26 is glycosylated (N-linked (GlcNAc...) asparagine). The tract at residues 51–72 (QRHRRTRPPPPLPRFPRPPRAL) is disordered. The span at 58-71 (PPPPLPRFPRPPRA) shows a compositional bias: pro residues. The region spanning 93-165 (CPAGEPWVSV…GKVDWGYCDC (73 aa)) is the Kringle domain. Cystine bridges form between C93–C165, C109–C149, C138–C163, C195–C259, C208–C269, C239–C249, C305–C369, C318–C379, C349–C359, C412–C475, C425–C485, C455–C465, C525–C589, C538–C599, C569–C579, C619–C750, C661–C677, C765–C831, C794–C808, and C821–C850. SRCR domains follow at residues 170–271 (VRLR…MCSF), 280–381 (IRLV…SCTP), 387–487 (IRLA…ACYP), and 500–601 (VRLM…ICDY). Positions 619–630 (CGLRLLHRRQKR) are zymogen activation region. One can recognise a Peptidase S1 domain in the interval 631 to 874 (IIGGKNSLRG…FVPWIKSVTK (244 aa)). Catalysis depends on H676, which acts as the Charge relay system. N683 is a glycosylation site (N-linked (GlcNAc...) asparagine). D726 functions as the Charge relay system in the catalytic mechanism. The Charge relay system role is filled by S825.

The protein belongs to the peptidase S1 family.

It is found in the secreted. Functionally, plays a role in neuronal plasticity and the proteolytic action may subserve structural reorganizations associated with learning and memory operations. The sequence is that of Neurotrypsin (PRSS12) from Saguinus labiatus (Red-chested mustached tamarin).